A 628-amino-acid polypeptide reads, in one-letter code: Leucine-rich repeat and fibronectin type-III domain-containing protein 3 (628 aa).

Positions 1–16 (MAVLPLLLCLLPLAPA) are cleaved as a signal peptide. Residues 17-540 (SSPPQPASPS…APHAPFLGGT (524 aa)) are Extracellular-facing. An LRRNT domain is found at 19 to 59 (PPQPASPSPCPRRCRCQTQSLPLSVLCPGAGLLFVPPSLDR). LRR repeat units lie at residues 60-83 (RAAELRLADNFIATVRRRDLANMT), 84-105 (GLLHLSLSRNTIRHVAAGAFSD), 108-129 (ALRALHLDGNRLTSLGEGQLRG), 132-153 (NLRHLILSNNQLAALAAGALDD), 157-178 (TLEDLDLSYNNLEQLPWEALGR), 181-202 (NVNTLGLDHNLLASVPAGAFSR), and 205-226 (KLARLDMTSNRLTTIPPDPLFS). Residues 249 to 295 (NPLHCNCELVWLRRLAREDDLEACASPPALGGRYFWAVGEEEFVCEP) form the LRRCT domain. Residues 295–382 (PPVVTHRSPP…GEATAAVELT (88 aa)) enclose the Ig-like domain. An intrachain disulfide couples Cys-317 to Cys-366. Residues Asn-348 and Asn-393 are each glycosylated (N-linked (GlcNAc...) asparagine). Residues 380 to 433 (ELTVGPPPPPQLANSTSCDPPRDGEPDALTPPSAASASASAKAAEAGPPTDRGV) form a disordered region. Residues 410–428 (PPSAASASASAKAAEAGPP) are compositionally biased toward low complexity. In terms of domain architecture, Fibronectin type-III spans 427 to 525 (PPTDRGVQVT…GCNRFSTEPA (99 aa)). A helical transmembrane segment spans residues 541-561 (MIIALGGVIVASVLVFIFVLL). Residues 562–628 (MRYKVHGGQP…WGPSHEPMGP (67 aa)) lie on the Cytoplasmic side of the membrane. The disordered stretch occupies residues 570-609 (QPPGKTKASAPVSSVCSQTNGALGPMPAPPAPEPSAPRAH). Residues 580 to 590 (PVSSVCSQTNG) show a composition bias toward polar residues. A compositionally biased stretch (pro residues) spans 595-604 (MPAPPAPEPS).

This sequence belongs to the LRFN family. As to quaternary structure, can form heteromeric complexes with LRFN1, LRFN2, LRFN4 and LRFN5. Able to form homomeric complexes across cell junctions, between adjacent cells. Does not interact with DLG4. Post-translationally, N-glycosylated.

The protein resides in the cell membrane. Its subcellular location is the cell projection. It localises to the axon. It is found in the dendrite. The protein localises to the synapse. The protein resides in the presynaptic cell membrane. Its subcellular location is the postsynaptic cell membrane. Cell adhesion molecule that mediates homophilic cell-cell adhesion in a Ca(2+)-independent manner. Promotes neurite outgrowth in hippocampal neurons. This Bos taurus (Bovine) protein is Leucine-rich repeat and fibronectin type-III domain-containing protein 3 (LRFN3).